We begin with the raw amino-acid sequence, 503 residues long: Zinc finger and BTB domain-containing protein 37 (503 aa).

One can recognise a BTB domain in the interval 32-96 (CDIVVNVQGQ…CYTGRICLQL (65 aa)). Disordered stretches follow at residues 140-206 (QTRT…SDVE) and 280-344 (GHGS…QVEE). Basic and acidic residues predominate over residues 144–154 (KHQERPPESHR). The span at 155-167 (VTPNLNRSLSPRH) shows a compositional bias: polar residues. The span at 319 to 336 (TERHRARSESPGRMDEPK) shows a compositional bias: basic and acidic residues. C2H2-type zinc fingers lie at residues 373–395 (LTCI…MRLH), 401–423 (FVCR…IRKH), and 429–452 (FHCH…RKNH). Residues 457–503 (PLEGPHSISPETTVTSRGQAEEESPSQEETVAPGEAVQGSVSTTGPD) are disordered. Residues 465-474 (SPETTVTSRG) show a composition bias toward polar residues.

The protein resides in the nucleus. Functionally, may be involved in transcriptional regulation. This is Zinc finger and BTB domain-containing protein 37 (ZBTB37) from Homo sapiens (Human).